Consider the following 129-residue polypeptide: Large ribosomal subunit protein bL19 (129 aa).

It belongs to the bacterial ribosomal protein bL19 family.

In terms of biological role, this protein is located at the 30S-50S ribosomal subunit interface and may play a role in the structure and function of the aminoacyl-tRNA binding site. The protein is Large ribosomal subunit protein bL19 of Paraburkholderia phytofirmans (strain DSM 17436 / LMG 22146 / PsJN) (Burkholderia phytofirmans).